A 147-amino-acid polypeptide reads, in one-letter code: Small nuclear ribonucleoprotein-associated protein B (147 aa).

In terms of domain architecture, Sm spans 1 to 84; that stretch reads MGTTKMVSLL…IVSLSVQGPP (84 aa). Disordered regions lie at residues 87–106 and 128–147; these read DPSM…PAGR and APPP…FRPV.

Belongs to the snRNP SmB/SmN family. In terms of assembly, belongs to the 40S cdc5-associated complex (or cwf complex), a spliceosome sub-complex reminiscent of a late-stage spliceosome composed of the U2, U5 and U6 snRNAs and at least brr2, cdc5, cwf2/prp3, cwf3/syf1, cwf4/syf3, cwf5/ecm2, spp42/cwf6, cwf7/spf27, cwf8, cwf9, cwf10, cwf11, cwf12, prp45/cwf13, cwf14, cwf15, cwf16, cwf17, cwf18, cwf19, cwf20, cwf21, cwf22, cwf23, cwf24, cwf25, cwf26, cyp7/cwf27, cwf28, cwf29/ist3, lea1, msl1, prp5/cwf1, prp10, prp12/sap130, prp17, prp22, sap61, sap62, sap114, sap145, slu7, smb1, smd1, smd3, smf1, smg1 and syf2.

The protein resides in the nucleus. Its subcellular location is the cytoplasm. Plays a role in pre-mRNA splicing as a core component of the spliceosomal U1, U2, U4 and U5 small nuclear ribonucleoproteins (snRNPs), the building blocks of the spliceosome. In Schizosaccharomyces pombe (strain 972 / ATCC 24843) (Fission yeast), this protein is Small nuclear ribonucleoprotein-associated protein B (smb1).